We begin with the raw amino-acid sequence, 304 residues long: Acetyl-coenzyme A carboxylase carboxyl transferase subunit beta (304 aa).

The CoA carboxyltransferase N-terminal domain occupies 23 to 292; that stretch reads VWTKCDSCGQ…PNPEAPREGV (270 aa). The Zn(2+) site is built by Cys27, Cys30, Cys46, and Cys49. The segment at 27–49 adopts a C4-type zinc-finger fold; sequence CDSCGQVLYRAELERNLEVCPKC. The segment at 284–304 is disordered; the sequence is NPEAPREGVVVPPVPDQEPEA. Residues 295-304 are compositionally biased toward pro residues; that stretch reads PPVPDQEPEA.

The protein belongs to the AccD/PCCB family. In terms of assembly, acetyl-CoA carboxylase is a heterohexamer composed of biotin carboxyl carrier protein (AccB), biotin carboxylase (AccC) and two subunits each of ACCase subunit alpha (AccA) and ACCase subunit beta (AccD). Requires Zn(2+) as cofactor.

It is found in the cytoplasm. It carries out the reaction N(6)-carboxybiotinyl-L-lysyl-[protein] + acetyl-CoA = N(6)-biotinyl-L-lysyl-[protein] + malonyl-CoA. Its pathway is lipid metabolism; malonyl-CoA biosynthesis; malonyl-CoA from acetyl-CoA: step 1/1. Its function is as follows. Component of the acetyl coenzyme A carboxylase (ACC) complex. Biotin carboxylase (BC) catalyzes the carboxylation of biotin on its carrier protein (BCCP) and then the CO(2) group is transferred by the transcarboxylase to acetyl-CoA to form malonyl-CoA. The sequence is that of Acetyl-coenzyme A carboxylase carboxyl transferase subunit beta from Escherichia coli O6:K15:H31 (strain 536 / UPEC).